A 901-amino-acid chain; its full sequence is Alanine--tRNA ligase (901 aa).

Zn(2+) contacts are provided by His-600, His-604, Cys-704, and His-708.

It belongs to the class-II aminoacyl-tRNA synthetase family. The cofactor is Zn(2+).

Its subcellular location is the cytoplasm. The catalysed reaction is tRNA(Ala) + L-alanine + ATP = L-alanyl-tRNA(Ala) + AMP + diphosphate. Catalyzes the attachment of alanine to tRNA(Ala) in a two-step reaction: alanine is first activated by ATP to form Ala-AMP and then transferred to the acceptor end of tRNA(Ala). Also edits incorrectly charged Ser-tRNA(Ala) and Gly-tRNA(Ala) via its editing domain. In Ignicoccus hospitalis (strain KIN4/I / DSM 18386 / JCM 14125), this protein is Alanine--tRNA ligase.